Here is a 148-residue protein sequence, read N- to C-terminus: MTERPFWQQKTLSEMSDDEWESLCDGCGQCCLHKLIDEDTEEIYFTNVACNQLNIKSCQCRNYEKRFEYEPDCIKLTRENLLTFNWLPATCAYRLVHEREDLPQWHPLVCGTKTEMHRERISVRHIAVRESEVVDWQDHILNKPGWAR.

Belongs to the UPF0260 family.

This is UPF0260 protein ECA2365 from Pectobacterium atrosepticum (strain SCRI 1043 / ATCC BAA-672) (Erwinia carotovora subsp. atroseptica).